The sequence spans 510 residues: Ectonucleoside triphosphate diphosphohydrolase 1 (510 aa).

Over 1–16 (MEDIKDSKVKRFCSKN) the chain is Cytoplasmic. A helical membrane pass occupies residues 17–37 (ILIILGFTSILAVIALIAVGL). At 38 to 478 (TQNKPLPENV…SPPLPHSTYI (441 aa)) the chain is on the extracellular side. The N-linked (GlcNAc...) asparagine glycan is linked to Asn73. Residues Cys84 and Cys108 are joined by a disulfide bond. The active-site Proton acceptor is the Glu174. N-linked (GlcNAc...) asparagine glycans are attached at residues Asn226, Asn291, and Asn333. 2 disulfides stabilise this stretch: Cys254/Cys300 and Cys281/Cys324. Intrachain disulfides connect Cys337–Cys342 and Cys391–Cys414. N-linked (GlcNAc...) asparagine glycans are attached at residues Asn428 and Asn457. Residues 479 to 499 (GLMVLFSLLLVAVAITGLFIY) traverse the membrane as a helical segment. The Cytoplasmic portion of the chain corresponds to 500 to 510 (SKPSYFWKEAV).

This sequence belongs to the GDA1/CD39 NTPase family. In terms of assembly, homodimer; disulfide-linked. The cofactor is Ca(2+). Mg(2+) is required as a cofactor. In terms of processing, N-glycosylated. Post-translationally, the N-terminus is blocked. Palmitoylated on Cys-13; which is required for caveola targeting.

The protein localises to the membrane. It localises to the caveola. It carries out the reaction a ribonucleoside 5'-triphosphate + 2 H2O = a ribonucleoside 5'-phosphate + 2 phosphate + 2 H(+). It catalyses the reaction a ribonucleoside 5'-triphosphate + H2O = a ribonucleoside 5'-diphosphate + phosphate + H(+). The enzyme catalyses a ribonucleoside 5'-diphosphate + H2O = a ribonucleoside 5'-phosphate + phosphate + H(+). The catalysed reaction is ATP + 2 H2O = AMP + 2 phosphate + 2 H(+). It carries out the reaction ATP + H2O = ADP + phosphate + H(+). It catalyses the reaction ADP + H2O = AMP + phosphate + H(+). The enzyme catalyses CTP + 2 H2O = CMP + 2 phosphate + 2 H(+). The catalysed reaction is CTP + H2O = CDP + phosphate + H(+). It carries out the reaction CDP + H2O = CMP + phosphate + H(+). It catalyses the reaction GTP + 2 H2O = GMP + 2 phosphate + 2 H(+). The enzyme catalyses GTP + H2O = GDP + phosphate + H(+). The catalysed reaction is GDP + H2O = GMP + phosphate + H(+). It carries out the reaction ITP + 2 H2O = IMP + 2 phosphate + 2 H(+). It catalyses the reaction ITP + H2O = IDP + phosphate + H(+). The enzyme catalyses IDP + H2O = IMP + phosphate + H(+). The catalysed reaction is UTP + 2 H2O = UMP + 2 phosphate + 2 H(+). It carries out the reaction UTP + H2O = UDP + phosphate + H(+). It catalyses the reaction UDP + H2O = UMP + phosphate + H(+). Functionally, catalyzes the hydrolysis of both di- and triphosphate nucleotides (NDPs and NTPs) and hydrolyze NTPs to nucleotide monophosphates (NMPs) in two distinct successive phosphate-releasing steps, with NDPs as intermediates and participates in the regulation of extracellular levels of nucleotides. By hydrolyzing proinflammatory ATP and platelet-activating ADP to AMP, it blocks platelet aggregation and supports blood flow. In Mus musculus (Mouse), this protein is Ectonucleoside triphosphate diphosphohydrolase 1.